Consider the following 1374-residue polypeptide: DNA-directed RNA polymerase subunit beta (1374 aa).

The protein belongs to the RNA polymerase beta chain family. The RNAP catalytic core consists of 2 alpha, 1 beta, 1 beta' and 1 omega subunit. When a sigma factor is associated with the core the holoenzyme is formed, which can initiate transcription.

It catalyses the reaction RNA(n) + a ribonucleoside 5'-triphosphate = RNA(n+1) + diphosphate. Its function is as follows. DNA-dependent RNA polymerase catalyzes the transcription of DNA into RNA using the four ribonucleoside triphosphates as substrates. This is DNA-directed RNA polymerase subunit beta from Rickettsia typhi (strain ATCC VR-144 / Wilmington).